Consider the following 250-residue polypeptide: 3-deoxy-manno-octulosonate cytidylyltransferase (250 aa).

The protein belongs to the KdsB family.

It localises to the cytoplasm. It catalyses the reaction 3-deoxy-alpha-D-manno-oct-2-ulosonate + CTP = CMP-3-deoxy-beta-D-manno-octulosonate + diphosphate. The protein operates within nucleotide-sugar biosynthesis; CMP-3-deoxy-D-manno-octulosonate biosynthesis; CMP-3-deoxy-D-manno-octulosonate from 3-deoxy-D-manno-octulosonate and CTP: step 1/1. It participates in bacterial outer membrane biogenesis; lipopolysaccharide biosynthesis. In terms of biological role, activates KDO (a required 8-carbon sugar) for incorporation into bacterial lipopolysaccharide in Gram-negative bacteria. This is 3-deoxy-manno-octulosonate cytidylyltransferase from Francisella tularensis subsp. tularensis (strain FSC 198).